The following is a 481-amino-acid chain: Dihydrolipoyl dehydrogenase (481 aa).

Residues 34–42 (EREHMGGIC) and Lys-51 contribute to the FAD site. Cys-42 and Cys-47 are disulfide-bonded. Residues 195–199 (GSGAI), Glu-218, and 284–287 (AVGV) each bind NAD(+). Residues Asp-326 and Ala-334 each coordinate FAD. The Proton acceptor role is filled by His-460.

Belongs to the class-I pyridine nucleotide-disulfide oxidoreductase family. Homodimer. Requires FAD as cofactor.

The protein resides in the cytoplasm. The catalysed reaction is N(6)-[(R)-dihydrolipoyl]-L-lysyl-[protein] + NAD(+) = N(6)-[(R)-lipoyl]-L-lysyl-[protein] + NADH + H(+). Lipoamide dehydrogenase is a component of the alpha-ketoacid dehydrogenase complexes. This chain is Dihydrolipoyl dehydrogenase (lpdA), found in Rhizobium etli (strain ATCC 51251 / DSM 11541 / JCM 21823 / NBRC 15573 / CFN 42).